We begin with the raw amino-acid sequence, 397 residues long: Troponin T, skeletal muscle (397 aa).

A compositionally biased stretch (acidic residues) spans 1–16 (MSDDEEYTSSEEEEVV). Disordered stretches follow at residues 1 to 148 (MSDD…NFTI), 234 to 261 (ERQK…YPPK), and 294 to 397 (DSNE…EEEE). Basic and acidic residues-rich tracts occupy residues 37 to 77 (EFIK…LKEK), 84 to 129 (TRAE…EKKR), and 136 to 148 (MKDK…NFTI). Composition is skewed to basic and acidic residues over residues 294 to 307 (DSNE…KEQY) and 319 to 329 (FGERPGKKAGE). A compositionally biased stretch (acidic residues) spans 331 to 397 (ETPEGEEDAK…EEEEEEEEEE (67 aa)).

Belongs to the troponin T family. In terms of processing, some glutamate residues are polyglycylated by TTLL3B. This modification occurs exclusively on glutamate residues and results in polyglycine chains on the gamma-carboxyl group. In terms of tissue distribution, isoform 3 is expressed in the hypoderm. Isoform 8 is expressed in the dorsal vessel. Isoform 6 is expressed in adult TDT muscle and isoform 9 in adult IFM, flight and jump muscles.

Its function is as follows. Troponin T is the tropomyosin-binding subunit of troponin, the thin filament regulatory complex which confers calcium-sensitivity to striated muscle actomyosin ATPase activity. This is Troponin T, skeletal muscle (up) from Drosophila melanogaster (Fruit fly).